The chain runs to 161 residues: Lipoprotein signal peptidase (161 aa).

The next 4 helical transmembrane spans lie at 8-28 (LKYFILAILIIAADLYTKYLA), 40-60 (ITSFFNLTLLYNHGAAFSLLS), 67-87 (QMIMFSTISLIAAIVLIYLII), and 91-111 (ITEKINLFSFALILGGALGNF). Active-site residues include Asp-122 and Asp-140. Residues 136–156 (FNIADSAITCGVVILIAASLF) traverse the membrane as a helical segment.

The protein belongs to the peptidase A8 family.

It localises to the cell inner membrane. It carries out the reaction Release of signal peptides from bacterial membrane prolipoproteins. Hydrolyzes -Xaa-Yaa-Zaa-|-(S,diacylglyceryl)Cys-, in which Xaa is hydrophobic (preferably Leu), and Yaa (Ala or Ser) and Zaa (Gly or Ala) have small, neutral side chains.. The protein operates within protein modification; lipoprotein biosynthesis (signal peptide cleavage). This protein specifically catalyzes the removal of signal peptides from prolipoproteins. The polypeptide is Lipoprotein signal peptidase (Francisella tularensis subsp. tularensis (strain FSC 198)).